The sequence spans 316 residues: Dof zinc finger protein DOF5.7 (316 aa).

The disordered stretch occupies residues methionine 1–lysine 42. Over residues serine 21–lysine 42 the composition is skewed to polar residues. Residues leucine 41 to lysine 95 form a Dof-type zinc finger. Positions 43, 46, 68, and 71 each coordinate Zn(2+). Disordered stretches follow at residues lysine 92 to serine 111 and asparagine 257 to glycine 294. The segment covering serine 101–serine 111 has biased composition (low complexity). Over residues asparagine 257–asparagine 291 the composition is skewed to polar residues.

It localises to the nucleus. Functionally, transcription factor that binds specifically to a 5'-AA[AG]G-3' consensus core sequence. The chain is Dof zinc finger protein DOF5.7 (DOF5.7) from Arabidopsis thaliana (Mouse-ear cress).